A 425-amino-acid polypeptide reads, in one-letter code: MIFQNTLEFAQQLDNQDELKEYKNEFIFPQHEGKNVIYFTGNSLGLQPKSARNYVDEVMNDWANLAVEGHFYADKPWWDYQERFANPLSKIVGAKPLEVTVMNTLTVNLHLLMVSFYRPTKKRYKIICEEKAFPSDQYMFQSQVNFHGYKPEDAIVEIKRREGEHNIRLEDILSKIEAVGDELALVLFGGVNYYTGQVFDMKTITEAGHKQGAKVGFDLAHAAGNIKLELHDWNVDFAAWCSYKYMNSGPGNASGCFVHEKHHSDSNLPRFAGWWGHNKERRFKMEPTFDPVHGADGWQISNLPILSLAPYLASVEMFAEVGIEKLIRKRNQITAYLEFILHEIDKEVKGHFEILTPTNQEERACQLSVFLHGEGRSLFDYLMKNGVVTDWREPNVIRLAPVPLYCSFEDMYNFGQILKKGILEN.

Residues L105, T106, 133–136, D218, H221, and Y243 contribute to the pyridoxal 5'-phosphate site; that span reads FPSD. K244 is subject to N6-(pyridoxal phosphate)lysine. Pyridoxal 5'-phosphate-binding residues include W274 and N302.

The protein belongs to the kynureninase family. As to quaternary structure, homodimer. The cofactor is pyridoxal 5'-phosphate.

It catalyses the reaction L-kynurenine + H2O = anthranilate + L-alanine + H(+). The enzyme catalyses 3-hydroxy-L-kynurenine + H2O = 3-hydroxyanthranilate + L-alanine + H(+). It participates in amino-acid degradation; L-kynurenine degradation; L-alanine and anthranilate from L-kynurenine: step 1/1. The protein operates within cofactor biosynthesis; NAD(+) biosynthesis; quinolinate from L-kynurenine: step 2/3. In terms of biological role, catalyzes the cleavage of L-kynurenine (L-Kyn) and L-3-hydroxykynurenine (L-3OHKyn) into anthranilic acid (AA) and 3-hydroxyanthranilic acid (3-OHAA), respectively. In Flavobacterium psychrophilum (strain ATCC 49511 / DSM 21280 / CIP 103535 / JIP02/86), this protein is Kynureninase.